Here is a 100-residue protein sequence, read N- to C-terminus: Small ribosomal subunit protein uS14c (100 aa).

The interval 1–31 (MARKSLIQREKKRQKLEQKYHSIRRSSKKEI) is disordered.

It belongs to the universal ribosomal protein uS14 family. Part of the 30S ribosomal subunit.

The protein localises to the plastid. It localises to the chloroplast. Its function is as follows. Binds 16S rRNA, required for the assembly of 30S particles. The protein is Small ribosomal subunit protein uS14c of Solanum bulbocastanum (Wild potato).